We begin with the raw amino-acid sequence, 311 residues long: Ornithine carbamoyltransferase (311 aa).

Residues Gln-85, Arg-109, and 136–139 contribute to the carbamoyl phosphate site; that span reads HPCQ. L-ornithine is bound by residues Asn-167, Asp-231, and 235–236; that span reads SM. Residues 271 to 272 and Arg-299 each bind carbamoyl phosphate; that span reads CL.

The protein belongs to the aspartate/ornithine carbamoyltransferase superfamily. OTCase family.

The protein localises to the cytoplasm. The catalysed reaction is carbamoyl phosphate + L-ornithine = L-citrulline + phosphate + H(+). Its pathway is amino-acid biosynthesis; L-arginine biosynthesis; L-arginine from L-ornithine and carbamoyl phosphate: step 1/3. Functionally, reversibly catalyzes the transfer of the carbamoyl group from carbamoyl phosphate (CP) to the N(epsilon) atom of ornithine (ORN) to produce L-citrulline. In Geobacillus stearothermophilus (Bacillus stearothermophilus), this protein is Ornithine carbamoyltransferase (argF).